The sequence spans 333 residues: Receptor polysaccharide phosphotransferase WefC (333 aa).

This sequence belongs to the stealth family.

Its function is as follows. Part of the type 2Gn receptor polysaccharide (RPS) biosynthesis locus. Essential for cell surface RPS production, and for synthesis of the host-like GalNAc beta 1-3Gal (Gn) motif of the RPS. Probably encodes a 1-3Gal alpha transferase. The protein is Receptor polysaccharide phosphotransferase WefC (wefC) of Streptococcus gordonii.